Consider the following 230-residue polypeptide: Demethylmenaquinone methyltransferase (230 aa).

S-adenosyl-L-methionine-binding positions include Thr-57, Asp-77, and 101–102; that span reads DI.

The protein belongs to the class I-like SAM-binding methyltransferase superfamily. MenG/UbiE family.

It carries out the reaction a 2-demethylmenaquinol + S-adenosyl-L-methionine = a menaquinol + S-adenosyl-L-homocysteine + H(+). Its pathway is quinol/quinone metabolism; menaquinone biosynthesis; menaquinol from 1,4-dihydroxy-2-naphthoate: step 2/2. Its function is as follows. Methyltransferase required for the conversion of demethylmenaquinol (DMKH2) to menaquinol (MKH2). The protein is Demethylmenaquinone methyltransferase of Chlamydia pneumoniae (Chlamydophila pneumoniae).